A 458-amino-acid polypeptide reads, in one-letter code: Tyrosine phenol-lyase (458 aa).

Position 258 is an N6-(pyridoxal phosphate)lysine (lysine 258).

This sequence belongs to the beta-eliminating lyase family. As to quaternary structure, homotetramer. Requires pyridoxal 5'-phosphate as cofactor.

It catalyses the reaction L-tyrosine + H2O = phenol + pyruvate + NH4(+). The chain is Tyrosine phenol-lyase (tpl) from Pasteurella multocida (strain Pm70).